Consider the following 493-residue polypeptide: Cytochrome P450 monooxygenase astA (493 aa).

The chain crosses the membrane as a helical span at residues 5 to 25 (EIILLGLAALAVTYQVIVWIY). Residues N174 and N286 are each glycosylated (N-linked (GlcNAc...) asparagine). C433 serves as a coordination point for heme.

It belongs to the cytochrome P450 family. The cofactor is heme.

The protein resides in the membrane. It catalyses the reaction asperterpenoid A + reduced [NADPH--hemoprotein reductase] + O2 = asperterpenoid C + oxidized [NADPH--hemoprotein reductase] + H2O + H(+). It participates in secondary metabolite biosynthesis; terpenoid biosynthesis. In terms of biological role, cytochrome P450 monooxygenase; part of the gene cluster that mediates the biosynthesis of the asperterpenoids, sesterterpenes that exhibit anti-tuberculosis activity. The first step of the pathway is performed by the sesterterpene synthase astC that possesses both prenyl transferase and terpene cyclase activity, converting isopentenyl diphosphate and dimethylallyl diphosphate into geranylfarnesyl diphosphate (GFPP) and further converting GFPP into preasperterpenoid A, respectively. The cytochrome P450 monooxygenase astB then dually oxidizes preasperterpenoid A to produce asperterpenoid A along with a minor product, asperterpenoid B. Finally, the cytochrome P450 monooxygenase astA converts asperterpenoid A into asperterpenoid C. This is Cytochrome P450 monooxygenase astA from Talaromyces wortmannii (Penicillium wortmannii).